A 219-amino-acid chain; its full sequence is RING finger protein nenya (219 aa).

Residues 6–48 (CNKCFRRRNVEPTLIFHMTQCQHVLCASCLSESSTDKKCPLCK) form an RING-type zinc finger. Positions 161-181 (NQARGLRPRTPSVTTSDNTQS) are disordered.

May interact with itself, with narya and vilya through its RING-type zinc finger.

Its function is as follows. Required for the formation of DNA double-strand breaks together with narya and vilya during the meiotic recombination process. Plays a redundant role with narya in chromosome segregation during female meiosis. In Drosophila melanogaster (Fruit fly), this protein is RING finger protein nenya.